The chain runs to 132 residues: Small ribosomal subunit protein uS8 (132 aa).

The protein belongs to the universal ribosomal protein uS8 family. As to quaternary structure, part of the 30S ribosomal subunit. Contacts proteins S5 and S12.

Its function is as follows. One of the primary rRNA binding proteins, it binds directly to 16S rRNA central domain where it helps coordinate assembly of the platform of the 30S subunit. This is Small ribosomal subunit protein uS8 from Syntrophomonas wolfei subsp. wolfei (strain DSM 2245B / Goettingen).